The chain runs to 101 residues: Small ribosomal subunit protein uS14 (101 aa).

Residues 33–69 (SQDASYEEKIDASTKLQKLPRDSSPSRHRNRCELSGR) form a disordered region. Over residues 51 to 68 (LPRDSSPSRHRNRCELSG) the composition is skewed to basic and acidic residues.

It belongs to the universal ribosomal protein uS14 family. In terms of assembly, part of the 30S ribosomal subunit. Contacts proteins S3 and S10.

Binds 16S rRNA, required for the assembly of 30S particles and may also be responsible for determining the conformation of the 16S rRNA at the A site. The polypeptide is Small ribosomal subunit protein uS14 (Xanthomonas axonopodis pv. citri (strain 306)).